A 242-amino-acid chain; its full sequence is Dickkopf-like protein 1 (242 aa).

The N-terminal stretch at 1–30 (MGEASPPAPARRHLLVLLLLLSTLVIPSAA) is a signal peptide. Asn-97 and Asn-112 each carry an N-linked (GlcNAc...) asparagine glycan.

Interacts with SLXL1; Co-localize in seminiferous tubules. Interacts with SLY. In terms of processing, N-glycosylated during spermatogenesis. Not N-glycosylated in mature sperm. More highly expressed in adult testis than in fetal testis. Exclusively expressed in the testis (at protein level). Intense expression in stages II, III and IV of spermatogenesis, whereas expression is lower in stage I.

The protein localises to the secreted. It is found in the cytoplasmic vesicle. Its subcellular location is the secretory vesicle. It localises to the acrosome. In terms of biological role, involved in fertilization by facilitating sperm penetration of the zona pellucida. May promote spermatocyte apoptosis, thereby limiting sperm production. In adults, may reduce testosterone synthesis in Leydig cells. Is not essential either for development or fertility. The sequence is that of Dickkopf-like protein 1 from Homo sapiens (Human).